The following is a 75-amino-acid chain: UPF0270 protein PFLU_4323 (75 aa).

It belongs to the UPF0270 family.

This is UPF0270 protein PFLU_4323 from Pseudomonas fluorescens (strain SBW25).